A 286-amino-acid polypeptide reads, in one-letter code: Putative sensory transducer protein YfmS (286 aa).

Residues 68-286 form the Methyl-accepting transducer domain; that stretch reads ITDAIRSNQK…KMAEKALEEE (219 aa).

The protein belongs to the methyl-accepting chemotaxis (MCP) protein family.

In terms of biological role, chemotactic-signal transducers respond to changes in the concentration of attractants and repellents in the environment, transduce a signal from the outside to the inside of the cell, and facilitate sensory adaptation through the variation of the level of methylation. Attractants increase the level of methylation while repellents decrease the level of methylation. The polypeptide is Putative sensory transducer protein YfmS (yfmS) (Bacillus subtilis (strain 168)).